Reading from the N-terminus, the 79-residue chain is Succinate dehydrogenase assembly factor 1, mitochondrial (79 aa).

The protein belongs to the complex I LYR family. SDHAF1 subfamily. Interacts with SDH2 within an SDH1-SDH2 subcomplex.

It is found in the mitochondrion matrix. Functionally, plays an essential role in the assembly of succinate dehydrogenase (SDH), an enzyme complex (also referred to as respiratory complex II) that is a component of both the tricarboxylic acid (TCA) cycle and the mitochondrial electron transport chain, and which couples the oxidation of succinate to fumarate with the reduction of ubiquinone (coenzyme Q) to ubiquinol. Promotes maturation of the iron-sulfur protein subunit SDH2 of the SDH catalytic dimer, protecting it from the deleterious effects of oxidants. Acts together with SDHAF3 (SDH7). This is Succinate dehydrogenase assembly factor 1, mitochondrial from Saccharomyces cerevisiae (strain YJM789) (Baker's yeast).